The chain runs to 189 residues: Crossover junction endodeoxyribonuclease RuvC (189 aa).

Residues Asp-9, Glu-70, and Asp-143 contribute to the active site. Asp-9, Glu-70, and Asp-143 together coordinate Mg(2+). Over residues 162–178 (MGAASGNSSLTPAQKAW) the composition is skewed to low complexity. Positions 162-189 (MGAASGNSSLTPAQKAWADAEAKARRKR) are disordered. Residues 179–189 (ADAEAKARRKR) are compositionally biased toward basic and acidic residues.

Belongs to the RuvC family. As to quaternary structure, homodimer which binds Holliday junction (HJ) DNA. The HJ becomes 2-fold symmetrical on binding to RuvC with unstacked arms; it has a different conformation from HJ DNA in complex with RuvA. In the full resolvosome a probable DNA-RuvA(4)-RuvB(12)-RuvC(2) complex forms which resolves the HJ. The cofactor is Mg(2+).

It is found in the cytoplasm. The catalysed reaction is Endonucleolytic cleavage at a junction such as a reciprocal single-stranded crossover between two homologous DNA duplexes (Holliday junction).. In terms of biological role, the RuvA-RuvB-RuvC complex processes Holliday junction (HJ) DNA during genetic recombination and DNA repair. Endonuclease that resolves HJ intermediates. Cleaves cruciform DNA by making single-stranded nicks across the HJ at symmetrical positions within the homologous arms, yielding a 5'-phosphate and a 3'-hydroxyl group; requires a central core of homology in the junction. The consensus cleavage sequence is 5'-(A/T)TT(C/G)-3'. Cleavage occurs on the 3'-side of the TT dinucleotide at the point of strand exchange. HJ branch migration catalyzed by RuvA-RuvB allows RuvC to scan DNA until it finds its consensus sequence, where it cleaves and resolves the cruciform DNA. This chain is Crossover junction endodeoxyribonuclease RuvC, found in Paenarthrobacter aurescens (strain TC1).